Reading from the N-terminus, the 151-residue chain is Large ribosomal subunit protein bL9 (151 aa).

Belongs to the bacterial ribosomal protein bL9 family.

Functionally, binds to the 23S rRNA. This chain is Large ribosomal subunit protein bL9, found in Thermosipho africanus (strain TCF52B).